The sequence spans 345 residues: Protoheme IX farnesyltransferase (345 aa).

9 consecutive transmembrane segments (helical) span residues 33-53 (VMSL…TPIH), 54-74 (PLLG…SGAL), 105-125 (ATLG…AINW), 126-146 (LAAG…TMWL), 154-174 (IVIG…AATG), 182-202 (LMVL…SLYI), 226-246 (QILL…FTGL), 247-267 (GGWL…TLAV), and 315-335 (ILYL…GLPI).

Belongs to the UbiA prenyltransferase family. Protoheme IX farnesyltransferase subfamily.

The protein resides in the cell inner membrane. It catalyses the reaction heme b + (2E,6E)-farnesyl diphosphate + H2O = Fe(II)-heme o + diphosphate. It participates in porphyrin-containing compound metabolism; heme O biosynthesis; heme O from protoheme: step 1/1. In terms of biological role, converts heme B (protoheme IX) to heme O by substitution of the vinyl group on carbon 2 of heme B porphyrin ring with a hydroxyethyl farnesyl side group. The polypeptide is Protoheme IX farnesyltransferase (Caulobacter sp. (strain K31)).